A 132-amino-acid polypeptide reads, in one-letter code: Small ribosomal subunit protein uS8 (132 aa).

This sequence belongs to the universal ribosomal protein uS8 family. As to quaternary structure, part of the 30S ribosomal subunit. Contacts proteins S5 and S12.

One of the primary rRNA binding proteins, it binds directly to 16S rRNA central domain where it helps coordinate assembly of the platform of the 30S subunit. In Lysinibacillus sphaericus (strain C3-41), this protein is Small ribosomal subunit protein uS8.